The following is a 404-amino-acid chain: Protein ARK2N (404 aa).

Basic and acidic residues-rich tracts occupy residues 1 to 12 and 23 to 32; these read MKMEEAVGKVEE and SEQETAKEED. Disordered regions lie at residues 1–50 and 63–255; these read MKME…ADST and RRDS…TNSD. Ser66 is modified (phosphoserine). Position 67 is a phosphoserine; by AMPK (Ser67). The segment covering 87-121 has biased composition (polar residues); that stretch reads SDSSNHCMLSPSSSGHLADSDTLSSAEENEPSQAE. 3 positions are modified to phosphoserine: Ser143, Ser145, and Ser147. The span at 169–187 shows a compositional bias: basic residues; sequence AKVKGHRSQKHKERIRLLR. Positions 175-200 form a coiled coil; sequence RSQKHKERIRLLRQKREAAARKKYNL. The interval 202 to 226 is required for interaction with CSNK2B; the sequence is QDSSTSDSDLTCDSSTSSSDDDEEV. Positions 203–219 are enriched in low complexity; the sequence is DSSTSDSDLTCDSSTSS. 3 positions are modified to phosphoserine: Ser327, Ser328, and Ser330. At Arg347 the chain carries Omega-N-methylarginine. Lys358 participates in a covalent cross-link: Glycyl lysine isopeptide (Lys-Gly) (interchain with G-Cter in SUMO2).

In terms of assembly, interacts with CSNK2B (via KSSR). Interacts with JUN; the interaction is mediated by CSNK2B. Post-translationally, phosphorylated at Ser-67 by AMPK. In skeletal muscle, phosphorylation is induced by exercise and seems to increase muscle contractile function. As to expression, expressed in skeletal muscle.

Its subcellular location is the nucleus. Its function is as follows. AMPK substrate important for exercise capacity and skeletal muscle function. Required for normal contraction-induced signaling. (Microbial infection) Upon Epstein-Barr virus (EBV) infection, suppresses viral BZLF1 expression and subsequent EBV reactivation by interacting with JUN and inhibiting its transcriptional activator activity on BZLF1 Z promoter. In Homo sapiens (Human), this protein is Protein ARK2N.